A 117-amino-acid polypeptide reads, in one-letter code: Small ribosomal subunit protein bS6 (117 aa).

Residues Thr97 to Asn117 are disordered.

Belongs to the bacterial ribosomal protein bS6 family.

Its function is as follows. Binds together with bS18 to 16S ribosomal RNA. The sequence is that of Small ribosomal subunit protein bS6 from Maricaulis maris (strain MCS10) (Caulobacter maris).